Consider the following 279-residue polypeptide: Calcium-binding protein 4 (279 aa).

Over residues 1–12 (MAEEQGRGRHGP) the composition is skewed to basic and acidic residues. The tract at residues 1–114 (MAEEQGRGRH…PGPQHDAAQR (114 aa)) is disordered. Residue S42 is modified to Phosphoserine. Over residues 55–65 (GPSSSGEQTPM) the composition is skewed to polar residues. EF-hand domains are found at residues 133-168 (EELD…LGYM), 187-204 (GRVD…KLRE), 210-245 (LGLR…LLGE), and 247-279 (LVGP…LSRH). 5 residues coordinate Ca(2+): D146, D148, D150, Y152, and D157. 10 residues coordinate Ca(2+): D223, D225, D227, R229, E234, D260, N262, D264, T266, and E271.

As to quaternary structure, interacts with CACNA1F and CACNA1D (via IQ domain) in a calcium independent manner. Interacts (via N-terminus) with UNC119. Phosphorylated. Phosphorylation levels change with the light conditions and regulate the activity. As to expression, expressed in the retina.

The protein resides in the cytoplasm. It localises to the presynapse. Functionally, may play a role in normal synaptic function, probably through regulation of Ca(2+) influx and neurotransmitter release in photoreceptor synaptic terminals and in auditory transmission. Modulator of CACNA1F, shifting the activation range to more hyperpolarized voltages. This Bos taurus (Bovine) protein is Calcium-binding protein 4 (CABP4).